The primary structure comprises 468 residues: MPANSWPDNDSYKELDPLNSLLSDVSTTEESVVETRDLSLPSRFQGRRGKAALVLTIVWSGTIALHLVSWGSIFILGLTTVLGIHALGVVFARPRHYQKEIQGSLPFVSILVAAKNEEAVIAKLAKNLCNLEYPNGQYEVWIIDDNSTDKTPHILAELAKEYDKLKVLRRSAQATGGKSGALNQVLPLTQGEIIAVFDADAQVASDMLLHVVPLFQREKVGAVQVRKAIANAKENFWTKGQMAEMSLDIWFQQQRTALGGIGELRGNGQFVRRQALDSCGGWNEETITDDLDLTFRLHLDKWDIECLFYPAVQEEGVTTAIALWHQRNRWAEGGYQRYLDYWDLILKNRMGTRKTWDMLMFMLTMYILPTAAIPDLLMALTRHRPPMLGPVTGLSVTMSVVGMFAGLRRIRQEQKFQVHTPFVLLLQTMRGTLYMLHWLVVMSSTTARMSFRPKRLKWVKTVHTGTGE.

A run of 4 helical transmembrane segments spans residues 51-71 (AALVLTIVWSGTIALHLVSWG), 72-92 (SIFILGLTTVLGIHALGVVFA), 358-378 (MLMFMLTMYILPTAAIPDLLM), and 387-407 (MLGPVTGLSVTMSVVGMFAGL).

The protein belongs to the glycosyltransferase 2 family. Requires Mg(2+) as cofactor.

It is found in the membrane. The catalysed reaction is a 1,2-diacyl-sn-glycerol + UDP-alpha-D-glucose = a 1,2-diacyl-3-O-(beta-D-glucopyranosyl)-sn-glycerol + UDP + H(+). Functionally, glucosyltransferase involved in the biosynthesis of the non-bilayer-forming membrane lipid beta-monoglucosyldiacylglycerol which contributes to regulate the properties and stability of the membrane. Catalyzes the transfer of a glucosyl residue from UDP-Glc to diacylglycerol (DAG) acceptor to form the corresponding beta-glucosyl-DAG (1,2-diacyl-3-O-(beta-D-glucopyranosyl)-sn-glycerol). It can only use UDP-Glc as sugar donor. Two types of DAG (dipalmitoyl-DAG (DPDAG) and 1-oleoyl-2-palmitoyl-DAG (OPDAG)) can be used as sugar acceptors, but OPDAG is preferred. The chain is Beta-monoglucosyldiacylglycerol synthase from Nostoc sp. (strain PCC 7120 / SAG 25.82 / UTEX 2576).